We begin with the raw amino-acid sequence, 83 residues long: SGHHZBSTBZASZSSKPCCRZCACTKSIPPZCRCSZVRLNSCHSACKSCACTFSIPAZCFCGBIBBFCYKPCKSSHSBBBBWN.

7 disulfide bridges follow: Cys-18/Cys-72, Cys-19/Cys-34, Cys-22/Cys-68, Cys-24/Cys-32, Cys-42/Cys-49, Cys-46/Cys-61, and Cys-51/Cys-59.

The protein belongs to the Bowman-Birk serine protease inhibitor family.

The chain is Bowman-Birk type seed trypsin and chymotrypsin inhibitor from Vigna unguiculata (Cowpea).